A 350-amino-acid polypeptide reads, in one-letter code: Adenine deaminase (350 aa).

Zn(2+)-binding residues include His-24, His-26, and His-207. The active-site Proton donor is Glu-210. Residue Asp-288 participates in Zn(2+) binding. Asp-289 contacts substrate.

This sequence belongs to the metallo-dependent hydrolases superfamily. Adenosine and AMP deaminases family. Adenine deaminase type 2 subfamily. The cofactor is Zn(2+).

The catalysed reaction is adenine + H2O + H(+) = hypoxanthine + NH4(+). In terms of biological role, catalyzes the hydrolytic deamination of adenine to hypoxanthine. Plays an important role in the purine salvage pathway and in nitrogen catabolism. This chain is Adenine deaminase, found in Paraburkholderia phytofirmans (strain DSM 17436 / LMG 22146 / PsJN) (Burkholderia phytofirmans).